A 276-amino-acid chain; its full sequence is Phosducin-like protein 1 (276 aa).

4 positions are modified to phosphoserine: Ser-18, Ser-19, Ser-20, and Ser-42. The disordered stretch occupies residues 18–74 (SSSEGEDNGDEGGDNKGASGKSRCSGLTIDTNPDATPAGGFRQQSSTNTGPKGVVKD). The Phosducin domain maps to 62–272 (SSTNTGPKGV…LIEHGIIVDR (211 aa)). The tract at residues 153–276 (FGQVQQLTSH…GIIVDRALYN (124 aa)) is thioredoxin fold.

It belongs to the phosducin family. Forms a complex with the beta and gamma subunits of the GTP-binding proteins. Interacts with the CCT chaperonin complex.

Functions as a co-chaperone for CCT in the assembly of heterotrimeric G protein complexes, facilitates the assembly of both Gbeta-Ggamma and RGS-Gbeta5 heterodimers. The protein is Phosducin-like protein 1 of Drosophila melanogaster (Fruit fly).